Here is a 397-residue protein sequence, read N- to C-terminus: Tryptophan synthase beta chain (397 aa).

Residue K91 is modified to N6-(pyridoxal phosphate)lysine.

It belongs to the TrpB family. As to quaternary structure, tetramer of two alpha and two beta chains. Pyridoxal 5'-phosphate serves as cofactor.

It catalyses the reaction (1S,2R)-1-C-(indol-3-yl)glycerol 3-phosphate + L-serine = D-glyceraldehyde 3-phosphate + L-tryptophan + H2O. It participates in amino-acid biosynthesis; L-tryptophan biosynthesis; L-tryptophan from chorismate: step 5/5. Functionally, the beta subunit is responsible for the synthesis of L-tryptophan from indole and L-serine. This chain is Tryptophan synthase beta chain, found in Bacillus cereus (strain ATCC 14579 / DSM 31 / CCUG 7414 / JCM 2152 / NBRC 15305 / NCIMB 9373 / NCTC 2599 / NRRL B-3711).